A 555-amino-acid polypeptide reads, in one-letter code: Urocanate hydratase (555 aa).

NAD(+) is bound by residues G51 to G52, Q129, G175 to G177, E195, Q262 to H266, Y272 to L273, and Y321. The active site involves C409. G491 contacts NAD(+).

This sequence belongs to the urocanase family. The cofactor is NAD(+).

It localises to the cytoplasm. The enzyme catalyses 4-imidazolone-5-propanoate = trans-urocanate + H2O. The protein operates within amino-acid degradation; L-histidine degradation into L-glutamate; N-formimidoyl-L-glutamate from L-histidine: step 2/3. Its function is as follows. Catalyzes the conversion of urocanate to 4-imidazolone-5-propionate. The sequence is that of Urocanate hydratase from Xanthomonas euvesicatoria pv. vesicatoria (strain 85-10) (Xanthomonas campestris pv. vesicatoria).